A 154-amino-acid chain; its full sequence is Large ribosomal subunit protein uL13 (154 aa).

Belongs to the universal ribosomal protein uL13 family. Part of the 50S ribosomal subunit.

This protein is one of the early assembly proteins of the 50S ribosomal subunit, although it is not seen to bind rRNA by itself. It is important during the early stages of 50S assembly. This Rhizobium johnstonii (strain DSM 114642 / LMG 32736 / 3841) (Rhizobium leguminosarum bv. viciae) protein is Large ribosomal subunit protein uL13.